The chain runs to 813 residues: LPS-assembly protein LptD (813 aa).

Positions 1-22 (MRRALRLLPLPLSIAICLPAMA) are cleaved as a signal peptide.

The protein belongs to the LptD family. Component of the lipopolysaccharide transport and assembly complex. Interacts with LptE and LptA.

The protein resides in the cell outer membrane. Together with LptE, is involved in the assembly of lipopolysaccharide (LPS) at the surface of the outer membrane. The sequence is that of LPS-assembly protein LptD from Xanthomonas axonopodis pv. citri (strain 306).